The primary structure comprises 495 residues: Cysteine-rich secretory protein LCCL domain-containing 2 (495 aa).

An N-terminal signal peptide occupies residues 1 to 22 (MSCLLNNMVLMGLALLVCGVQA). Asn-27 is a glycosylation site (N-linked (GlcNAc...) asparagine). In terms of domain architecture, SCP spans 60 to 200 (LMLHNKLRGQ…ENAVYLVCNY (141 aa)). 2 LCCL domains span residues 282–377 (MTQV…SSSF) and 383–486 (TETA…QNGN). 4 disulfide bridges follow: Cys-288-Cys-306, Cys-310-Cys-330, Cys-389-Cys-411, and Cys-415-Cys-438.

As to quaternary structure, binds to heparin, dermatan sulfate and chondroitin sulfate. Present in kidney renal tubules (at protein level).

The protein resides in the secreted. Promotes matrix assembly. This chain is Cysteine-rich secretory protein LCCL domain-containing 2 (Crispld2), found in Mus musculus (Mouse).